The sequence spans 712 residues: TGF-beta-activated kinase 1 and MAP3K7-binding protein 3 (712 aa).

The residue at position 2 (alanine 2) is an N-acetylalanine. A CUE domain is found at 8–51 (LDIQVLHDLRQRFPEIPEGVVSQCMLQNNNNLEACCRALSQESS). Phosphoserine occurs at positions 60, 101, and 103. Disordered stretches follow at residues 141–189 (FMNE…HIPR), 227–345 (PGSI…KQGS), 369–447 (TVEP…SPRV), and 475–509 (ERSA…SSGS). Over residues 163–173 (MQTGMNPSAMQ) the composition is skewed to polar residues. Low complexity-rich tracts occupy residues 233-249 (RQTS…QSTP) and 269-290 (YPHQ…IPQS). The span at 322 to 332 (PPSPSTTPPHP) shows a compositional bias: pro residues. 2 stretches are compositionally biased toward polar residues: residues 336–345 (GPPSYQKQGS) and 371–404 (EPSQ…TATT). Serine 385 carries the post-translational modification Phosphoserine. At threonine 404 the chain carries Phosphothreonine. Positions 405–417 (PPSSSPSRGISSQ) are enriched in low complexity. A phosphoserine mark is found at serine 409 and serine 492. Residue serine 506 is modified to Phosphoserine; by MAPKAPK2 and MAPKAPK3. Residues 517 to 559 (ALLLHQRARMERLAKQLKLEKEELERLKSEVNGMEHDLMQRRL) adopt a coiled-coil conformation. A disordered region spans residues 609-636 (MNNFYDNIEPGPVVPPKPSKKDSSDPCT). Over residues 627 to 636 (SKKDSSDPCT) the composition is skewed to basic and acidic residues. Residue lysine 649 forms a Glycyl lysine isopeptide (Lys-Gly) (interchain with G-Cter in ubiquitin) linkage. Basic and acidic residues predominate over residues 658-667 (QAAAADEHRT). Positions 658-682 (QAAAADEHRTGSTQSPRTQPRDEDY) are disordered. The segment at 682–712 (YEGAPWNCDSCTFLNHPALNRCEQCEMPRYT) adopts a RanBP2-type zinc-finger fold. A (Microbial infection) S-methylcysteine modification is found at cysteine 692.

As to quaternary structure, interacts with TAB1, TAB2, MAP3K7, TRAF2 and TRAF6. The minimal TAB3-containing complex (TAB1-MAP3K7-TAB3) appears not to contain TAB2. However, it seems sensible to consider that TAB2 may also join this complex and may act in a cooperative manner with TAB3. Interacts with DYNC2I2 (via the WD domains). Interacts with RBCK1. Binds 'Lys-63'-linked polyubiquitin chains. Interacts with TRIM5. Interacts with TRIM38 (via B30.2/SPRY domain), leading to its translocation to lysosomes and degradation. Interacts with ASB1. (Microbial infection) Interacts with M.tuberculosis PtpA, which blocks the NF-kappa-B signaling pathway. In terms of processing, ubiquitinated; following IL1 stimulation or TRAF6 overexpression. Ubiquitinated by AMFR via 'Lys-27'-linked polyubiquitination; leading to TAK1/MAP3K7 activation. Degraded in a lysosome-dependent manner following interaction with TRIM38. Post-translationally, phosphorylated at Ser-506 by MAPKAPK2 and MAPKAPK3 following IL1 treatment. In terms of processing, (Microbial infection) Methylated at Cys-692 by enteropathogenic E.coli protein NleE or S.flexneri protein OspZ: methylation disrupts zinc-binding and ability to bind 'Lys-63'-linked ubiquitin, leading to NF-kappa-B inactivation. In terms of tissue distribution, widely expressed. Constitutively overexpressed in certain tumor tissues. As to expression, major transcript. Minor transcript.

Its function is as follows. Adapter required to activate the JNK and NF-kappa-B signaling pathways through the specific recognition of 'Lys-63'-linked polyubiquitin chains by its RanBP2-type zinc finger (NZF). Acts as an adapter linking MAP3K7/TAK1 and TRAF6 to 'Lys-63'-linked polyubiquitin chains. The RanBP2-type zinc finger (NZF) specifically recognizes Lys-63'-linked polyubiquitin chains unanchored or anchored to the substrate proteins such as RIPK1/RIP1 and RIPK2: this acts as a scaffold to organize a large signaling complex to promote autophosphorylation of MAP3K7/TAK1, and subsequent activation of I-kappa-B-kinase (IKK) core complex by MAP3K7/TAK1. In terms of biological role, may be an oncogenic factor. The sequence is that of TGF-beta-activated kinase 1 and MAP3K7-binding protein 3 from Homo sapiens (Human).